A 208-amino-acid chain; its full sequence is Cysteine-rich protein 2 (208 aa).

An LIM zinc-binding 1 domain is found at Cys-5 to Cys-57. Lys-23 carries the post-translational modification N6-acetyllysine. The segment at Ala-98–Phe-119 is disordered. Position 104 is a phosphoserine (Ser-104). In terms of domain architecture, LIM zinc-binding 2 spans Cys-126–Cys-178. Lys-138 and Lys-144 each carry N6-acetyllysine.

Interacts with TGFB1I1.

The sequence is that of Cysteine-rich protein 2 (CRIP2) from Pongo abelii (Sumatran orangutan).